We begin with the raw amino-acid sequence, 115 residues long: UPF0102 protein SYO3AOP1_0546 (115 aa).

The protein belongs to the UPF0102 family.

This Sulfurihydrogenibium sp. (strain YO3AOP1) protein is UPF0102 protein SYO3AOP1_0546.